The following is a 943-amino-acid chain: MTTLGQRDRRPDALGSLSVLPDETICVLLEYLAPRDIAHLACVSSVMYILCNEEPLWMSLCLRRAKGPLEYKGSWKKTTLHLEGVTQENDAYRKCFHFDGFMSLYLYKRFYRCNTSLDGFSFDNGNVERRRNISLDEFSKEYDAKKPVLLSGLADSWPASNTWTIDQLSEKYGEVPFRISQRSPNKISMKFKDYIAYMKTQRDEDPLYVFDDKFGEAAPELLKDYSVPHLFQEDWFEILDKESRPPYRWLIVGPERSGASWHVDPALTSAWNTLLCGRKRWALYPPGKVPLGVTVHVNEDDGDVSIDTPSSLQWWLDYYPLLADEDKPIECTLLPGETIYVPSGWWHCILNLEPTVAVTQNFVNKENFGFVCLDMAPGYHHKGVCRAGLLALDDENSEDLEEETHDEEDNTLSYSDLTRKEKRTRMNGGGETENREEDVNGVSKRYNMWKNGFSYDIDFLASFLDKERDHYNFPWSMGNSVGQREMRAWLSKLWVLKPEMRELIWKGACIALNAEKWLRCLEEVCTFHNLPLVTEDEKLPVGTGSNPVYLLSDYAIKLFVEGGLEQSMYGLGTELEFYDILGRADSPLKTHIPEVLASGILFFEKGSYKVVPWDGKRIPDIISSSSFDFDASMLNSEFPFGIWNKTLREHKNQGKPAPDSFGSLSSHVWPYIITKRCKGKIFAQLRDDLTWNDAQNLAFFLGQQLRNLHLLPYPPVTRPELLNVNAVHEELNIPAEWKVFVDALCQKKKDVTSRLENWGNPIPRALMTKIDEYIPDDFFVDLLHVFKETNGGDEIKPCTWIHSDVMDDNIHMEPYADDSVDGQHNSWRPSHILDFSDLTIGDPICDLIPIYLDVFRGDADLLKKLLENYGLPLIRSRSSENGTTKTADSTRKKVLSPSYRTMCYCILHEENVLGSIFSIWDELRTAESWEQVEQTVWSLLNTY.

An F-box domain is found at 14–60 (LGSLSVLPDETICVLLEYLAPRDIAHLACVSSVMYILCNEEPLWMSL). In terms of domain architecture, JmjC spans 216 to 379 (EAAPELLKDY…FVCLDMAPGY (164 aa)). 3 residues coordinate Fe cation: H262, D264, and H347. A compositionally biased stretch (acidic residues) spans 396-410 (NSEDLEEETHDEEDN). Residues 396–438 (NSEDLEEETHDEEDNTLSYSDLTRKEKRTRMNGGGETENREED) form a disordered region.

Belongs to the JARID1 histone demethylase family. Fe(2+) serves as cofactor. In terms of tissue distribution, mostly expressed in leaves, and, to a lower extent, in inflorescences, roots, siliques and stems.

It is found in the nucleus. Functionally, may function as histone H3 lysine demethylase and be involved in regulation of gene expression. In Arabidopsis thaliana (Mouse-ear cress), this protein is Lysine-specific demethylase JMJ21.